Here is a 196-residue protein sequence, read N- to C-terminus: Serine recombinase PinQ (196 aa).

Residues 3–143 (QIFAYCRIST…SGIVRARGAG (141 aa)) enclose the Resolvase/invertase-type recombinase catalytic domain. Ser-11 functions as the O-(5'-phospho-DNA)-serine intermediate in the catalytic mechanism.

Belongs to the site-specific recombinase resolvase family.

The sequence is that of Serine recombinase PinQ (pinQ) from Escherichia coli (strain K12).